A 399-amino-acid chain; its full sequence is Elongation factor Tu (399 aa).

A tr-type G domain is found at 10 to 204 (KPHVNIGTIG…AVDASIPEPE (195 aa)). Positions 19 to 26 (GHVDHGKT) are G1. 19 to 26 (GHVDHGKT) is a GTP binding site. Thr26 contributes to the Mg(2+) binding site. The tract at residues 60-64 (GITIN) is G2. The tract at residues 81–84 (DCPG) is G3. GTP-binding positions include 81 to 85 (DCPGH) and 136 to 139 (NKCD). The interval 136–139 (NKCD) is G4. Positions 174–176 (SGL) are G5.

The protein belongs to the TRAFAC class translation factor GTPase superfamily. Classic translation factor GTPase family. EF-Tu/EF-1A subfamily. In terms of assembly, monomer.

The protein localises to the cytoplasm. The catalysed reaction is GTP + H2O = GDP + phosphate + H(+). Functionally, GTP hydrolase that promotes the GTP-dependent binding of aminoacyl-tRNA to the A-site of ribosomes during protein biosynthesis. The sequence is that of Elongation factor Tu from Prochlorococcus marinus (strain MIT 9215).